Reading from the N-terminus, the 920-residue chain is Plasma membrane ATPase (920 aa).

The segment at 1 to 77 (MADHSASGAP…TPGGGRVVPE (77 aa)) is disordered. Topologically, residues 1-115 (MADHSASGAP…KEEKENHFLK (115 aa)) are cytoplasmic. Acidic residues predominate over residues 38–51 (EDDEDEDIDALIED). The helical transmembrane segment at 116 to 138 (FLGFFVGPIQFVMEGAAVLAAGL) threads the bilayer. Residues 139–140 (ED) lie on the Extracellular side of the membrane. The chain crosses the membrane as a helical span at residues 141–160 (WVDFGVICGLLLLNAVVGFV). The Cytoplasmic segment spans residues 161 to 291 (QEFQAGSIVD…GSGHFTEVLN (131 aa)). The chain crosses the membrane as a helical span at residues 292–314 (GIGTILLILVIFTLLIVWVSSFY). Topologically, residues 315 to 321 (RSNPIVQ) are extracellular. A helical transmembrane segment spans residues 322-354 (ILEFTLAITIIGVPVGLPAVVTTTMAVGAAYLA). Topologically, residues 355–687 (KKKAIVQKLS…LKTSRQIFHR (333 aa)) are cytoplasmic. The 4-aspartylphosphate intermediate role is filled by Asp378. Asp634 and Asp638 together coordinate Mg(2+). Residues 688–713 (MYAYVVYRIALSIHLEIFLGLWIAIL) traverse the membrane as a helical segment. Over 714–720 (NRSLNIE) the chain is Extracellular. A helical membrane pass occupies residues 721-738 (LVVFIAIFADVATLAIAY). Residues 739-754 (DNAPYSQTPVKWNLPK) are Cytoplasmic-facing. A helical transmembrane segment spans residues 755–779 (LWGMSVLLGVVLAVGTWITVTTMYA). The Extracellular portion of the chain corresponds to 780–806 (QGENGGIVQNFGNMDEVLFLQISLTEN). Helical transmembrane passes span 807 to 826 (WLIF…PSWQ) and 827 to 847 (LSGA…WGWF). Topologically, residues 848–853 (EHSDTS) are extracellular. Residues 854–878 (IVAVVRIWIFSFGIFCIMGGVYYIL) form a helical membrane-spanning segment. The Cytoplasmic portion of the chain corresponds to 879-920 (QDSVGFDNLMHGKSPKGNQKQRSLEDFVVSLQRVSTQHEKSQ).

The protein belongs to the cation transport ATPase (P-type) (TC 3.A.3) family. Type IIIA subfamily.

The protein localises to the cell membrane. The enzyme catalyses ATP + H2O + H(+)(in) = ADP + phosphate + 2 H(+)(out). Its function is as follows. The plasma membrane ATPase of plants and fungi is a hydrogen ion pump. The proton gradient it generates drives the active transport of nutrients by H(+)-symport. The resulting external acidification and/or internal alkinization may mediate growth responses. The protein is Plasma membrane ATPase (pma-1) of Neurospora crassa (strain ATCC 24698 / 74-OR23-1A / CBS 708.71 / DSM 1257 / FGSC 987).